A 641-amino-acid chain; its full sequence is Phosphomethylpyrimidine synthase (641 aa).

Positions 1-12 are enriched in polar residues; that stretch reads MTDTSTQNTATP. Residues 1–25 form a disordered region; it reads MTDTSTQNTATPTDEYGAEIHPKHS. Substrate contacts are provided by residues asparagine 200, methionine 229, tyrosine 258, histidine 294, 314 to 316, 355 to 358, and glutamate 394; these read SRG and DGLR. Histidine 398 lines the Zn(2+) pocket. Tyrosine 421 is a substrate binding site. Histidine 462 lines the Zn(2+) pocket. [4Fe-4S] cluster-binding residues include cysteine 542, cysteine 545, and cysteine 550.

Belongs to the ThiC family. Requires [4Fe-4S] cluster as cofactor.

It carries out the reaction 5-amino-1-(5-phospho-beta-D-ribosyl)imidazole + S-adenosyl-L-methionine = 4-amino-2-methyl-5-(phosphooxymethyl)pyrimidine + CO + 5'-deoxyadenosine + formate + L-methionine + 3 H(+). It functions in the pathway cofactor biosynthesis; thiamine diphosphate biosynthesis. In terms of biological role, catalyzes the synthesis of the hydroxymethylpyrimidine phosphate (HMP-P) moiety of thiamine from aminoimidazole ribotide (AIR) in a radical S-adenosyl-L-methionine (SAM)-dependent reaction. The sequence is that of Phosphomethylpyrimidine synthase from Corynebacterium jeikeium (strain K411).